The following is a 312-amino-acid chain: tRNA (adenine(58)-N(1))-methyltransferase catalytic subunit trmt61a (312 aa).

Residues leucine 85, 112-114 (SGS), glutamate 133, arginine 138, 161-162 (DA), and aspartate 183 contribute to the S-adenosyl-L-methionine site.

The protein belongs to the class I-like SAM-binding methyltransferase superfamily. TRM61 family. Heterotetramer; composed of two copies of trmt6 and two copies of trmt61a.

It localises to the nucleus. The enzyme catalyses adenosine(58) in tRNA + S-adenosyl-L-methionine = N(1)-methyladenosine(58) in tRNA + S-adenosyl-L-homocysteine + H(+). Its activity is regulated as follows. Inhibited by calcium and magnesium ions and spermidine. Enhanced by KCl, NaCl and NH(4)Cl in concentrations from 0.1-0.25 M. Concentrations of more than 0.3 M are inhibitory. In terms of biological role, catalytic subunit of tRNA (adenine-N(1)-)-methyltransferase, which catalyzes the formation of N(1)-methyladenine at position 58 (m1A58) in initiator methionyl-tRNA. In Dictyostelium discoideum (Social amoeba), this protein is tRNA (adenine(58)-N(1))-methyltransferase catalytic subunit trmt61a (trmt61a).